Here is a 210-residue protein sequence, read N- to C-terminus: Phosphate propanoyltransferase (210 aa).

26 to 28 (ISN) is a binding site for CoA. Residues H30 and H32 each contribute to the Zn(2+) site. The CoA site is built by K71 and R78. Residue R84 coordinates phosphate. Zn(2+)-binding residues include E90, H138, H140, and H186. CoA is bound at residue N193.

The protein belongs to the PduL family. The cofactor is Zn(2+).

The protein resides in the bacterial microcompartment. The catalysed reaction is propanoyl-CoA + phosphate = propanoyl phosphate + CoA. Its pathway is polyol metabolism; 1,2-propanediol degradation. Functionally, involved in 1,2-propanediol (1,2-PD) utilization within the bacterial microcompartment (BMC) dedicated to 1,2-PD degradation by catalyzing the conversion of propanoyl-CoA to propanoyl-phosphate. Required for optimal growth on 1,2-PD. CoA is regenerated within the BMC (for use by PduP) via this enzyme, although there must also be cofactor transport across the BMC. Directly targeted to the BMC. In terms of biological role, expression of a cosmid containing the full 21-gene pdu operon in E.coli allows E.coli to grow on 1,2-propanediol (1,2-PD) with the appearance of bacterial microcompartments (BMC) in its cytoplasm. The 1,2-PD-specific bacterial microcompartment (BMC) concentrates low levels of 1,2-PD catabolic enzymes, concentrates volatile reaction intermediates thus enhancing pathway flux and keeps the level of toxic, mutagenic propionaldehyde low. This chain is Phosphate propanoyltransferase, found in Citrobacter freundii.